Consider the following 263-residue polypeptide: Palmitoyltransferase ZDHHC21 (263 aa).

At 1–4 the chain is on the cytoplasmic side; sequence MKMR. The helical transmembrane segment at 5–25 threads the bilayer; that stretch reads LHFVVDPMGWFCMSMVFFVWI. Residues 26–44 are Extracellular-facing; the sequence is YNSFLIPKLVLLPHYAEGH. The helical transmembrane segment at 45-65 threads the bilayer; sequence ITAEPVICYYLASLLCFSALF. The Cytoplasmic segment spans residues 66–131; it reads RASTTDPGKL…WINNCVGEDN (66 aa). The DHHC domain maps to 90–140; the sequence is ELCNKCNMMRPKRSHHCSRCGHCVRRMDHHCPWINNCVGEDNHWLFLQLCF. Catalysis depends on C120, which acts as the S-palmitoyl cysteine intermediate. The helical transmembrane segment at 132-152 threads the bilayer; that stretch reads HWLFLQLCFYTQVLSFYTLVL. Residues 153-181 are Extracellular-facing; the sequence is DFCQYYYFLPLSSVDQADFAVHHELALLR. Residues 182–202 traverse the membrane as a helical segment; the sequence is VSCFMGLIMFGGISSLFYTQV. Residues 203–263 are Cytoplasmic-facing; the sequence is KGILTDTTTI…KLNLTIRSHV (61 aa).

This sequence belongs to the DHHC palmitoyltransferase family.

The protein localises to the golgi apparatus membrane. It is found in the golgi apparatus. Its subcellular location is the cis-Golgi network membrane. It localises to the cell membrane. The catalysed reaction is L-cysteinyl-[protein] + hexadecanoyl-CoA = S-hexadecanoyl-L-cysteinyl-[protein] + CoA. Functionally, palmitoyltransferase that catalyzes the addition of palmitate onto various protein substrates. The protein is Palmitoyltransferase ZDHHC21 of Danio rerio (Zebrafish).